The primary structure comprises 462 residues: MGKEKTHINIVVIGHVDSGKSTTTGHLIYKCGGIDKRTIEKFEKEAAEMGKGSFKYAWVLDKLKAERERGITIDISLWKFETSKYYVTIIDAPGHRDFIKNMITGTSQADCAVLIVAAGVGEFEAGISKNGQTREHALLAYTLGVKQLIVGVNKMDSTEPPYSQKRYEEIVKEVSTYIKKIGYNPDTVAFVPISGWNGDNMLEPSANMPWFKGWKVTRKDGSASGTTLLEALDCILPPTRPTDKPLRLPLQDVYKIGGIGTVPVGRVETGVLKPGMVVTFAPVNVTTEVKSVEMHHEALSEALPGDNVGFNVKNVSVKDVRRGNVAGDSKNDPPMEAAGFTAQVIILNHPGQISAGYAPVLDCHTAHIACKFAELKEKIDRRSGKKLEDGPKFLKSGDAAIVDMVPGKPMCVESFSDYPPLGRFAVRDMRQTVAVGVIKAVDKKAAGAGKVTKSAQKAQKAK.

N,N,N-trimethylglycine is present on G2. Residues 5-242 (KTHINIVVIG…DCILPPTRPT (238 aa)) enclose the tr-type G domain. The G1 stretch occupies residues 14-21 (GHVDSGKS). 14–21 (GHVDSGKS) is a GTP binding site. K36 is subject to N6,N6,N6-trimethyllysine; alternate. An N6,N6-dimethyllysine; alternate modification is found at K36. K36 is modified (N6-methyllysine; alternate). An N6,N6-dimethyllysine modification is found at K55. The G2 stretch occupies residues 70-74 (GITID). K79 carries the N6,N6,N6-trimethyllysine; by EEF1AKMT1 modification. The G3 stretch occupies residues 91–94 (DAPG). 153–156 (NKMD) lines the GTP pocket. Positions 153-156 (NKMD) are G4. Position 165 is an N6,N6,N6-trimethyllysine; alternate; by EEF1AKMT3 (K165). An N6,N6-dimethyllysine; alternate; by EEF1AKMT3 modification is found at K165. K165 is subject to N6-acetyllysine; alternate. The residue at position 165 (K165) is an N6-methyllysine; alternate; by EEF1AKMT3. N6-acetyllysine is present on K172. GTP is bound at residue 194–196 (SGW). Positions 194 to 196 (SGW) are G5. Residue K273 is modified to N6-acetyllysine. At S300 the chain carries Phosphoserine; by TGFBR1. 5-glutamyl glycerylphosphorylethanolamine is present on E301. Position 318 is an N6,N6,N6-trimethyllysine; by EEF1AKMT2 (K318). Position 374 is a 5-glutamyl glycerylphosphorylethanolamine (E374). Residue K385 forms a Glycyl lysine isopeptide (Lys-Gly) (interchain with G-Cter in ubiquitin) linkage. N6-acetyllysine; alternate is present on K392. Position 392 is an N6-succinyllysine; alternate (K392). T432 carries the post-translational modification Phosphothreonine; by PASK. At K439 the chain carries N6-acetyllysine.

Belongs to the TRAFAC class translation factor GTPase superfamily. Classic translation factor GTPase family. EF-Tu/EF-1A subfamily. In terms of assembly, found in a nuclear export complex with XPO5, EEF1A1, Ran and aminoacylated tRNA. Interacts with PARP1 and TXK. Interacts with KARS1. May interact with ERGIC2. Interacts with IFIT1 (via TPR repeats 4-7). Interacts with DLC1, facilitating distribution to the membrane periphery and ruffles upon growth factor stimulation. Interacts with ZPR1; the interaction occurs in a epidermal growth factor (EGF)-dependent manner. Interacts with PPP1R16B. Interacts with SPHK1 and SPHK2; both interactions increase SPHK1 and SPHK2 kinase activity. Interacts with guanyl-nucleotide exchange factor EEF1B2. Interacts (via middle-region) with HTATIP2 (via N-terminus); the interaction is direct and competes with EEF1A1 binding to guanyl-nucleotide exchange factor EEF1B2, thereby inhibiting GDP for GTP exchange and reactivation of EEF1A1. Interacts with tRNA. Post-translationally, ISGylated. In terms of processing, phosphorylated by TXK. Phosphorylation by PASK increases translation efficiency. Phosphorylated by ROCK2. Phosphorylation by TGFBR1 inhibits translation elongation. Trimethylated at Lys-79 by EEF1AKMT1. Methylated at Lys-165 by EEF1AKMT3, methylation by EEF1AKMT3 is dynamic as well as inducible by stress conditions, such as ER-stress, and plays a regulatory role on mRNA translation. Trimethylated at Lys-318 by EEF1AKMT2. Mono-, di-, and trimethylated at Lys-36 by EEF1AKMT4; trimethylated form is predominant. Methylation by EEF1AKMT4 contributes to the fine-tuning of translation rates for a subset of tRNAs. Trimethylated at Gly-2 by METTL13. Mono- and dimethylated at Lys-55 by METTL13; dimethylated form is predominant. Post-translationally, ubiquitinated at Lys-385 by RNF14 in response to ribosome collisions (ribosome stalling), leading to its degradation by the proteasome and rescue of stalled ribosomes.

The protein resides in the cytoplasm. Its subcellular location is the nucleus. The protein localises to the nucleolus. It localises to the cell membrane. It carries out the reaction GTP + H2O = GDP + phosphate + H(+). Translation elongation factor that catalyzes the GTP-dependent binding of aminoacyl-tRNA (aa-tRNA) to the A-site of ribosomes during the elongation phase of protein synthesis. Base pairing between the mRNA codon and the aa-tRNA anticodon promotes GTP hydrolysis, releasing the aa-tRNA from EEF1A1 and allowing its accommodation into the ribosome. The growing protein chain is subsequently transferred from the P-site peptidyl tRNA to the A-site aa-tRNA, extending it by one amino acid through ribosome-catalyzed peptide bond formation. Also plays a role in the positive regulation of IFNG transcription in T-helper 1 cells as part of an IFNG promoter-binding complex with TXK and PARP1. Also plays a role in cytoskeleton organization by promoting actin bundling. The protein is Elongation factor 1-alpha 1 (EEF1A1) of Cricetulus griseus (Chinese hamster).